Here is a 333-residue protein sequence, read N- to C-terminus: MARILDNDLLGDEEYVERTLRPQYFKEYIGQDKVKDQLKIFIEAAKLRDEALDHTLLFGPPGLGKTTMAFVIANEMGVNLKQTSGPAIEKAGDLVAILNDLEPGDILFIDEIHRMPMAVEEVLYSAMEDYYIDIMIGAGETSRSVHLDLPPFTLVGATTRAGMLSNPLRARFGINGHMEYYELPDLTEIVERTSEIFEMTITPEAALELARRSRGTPRIANRLLKRVRDYAQIMGDGVIDDKIADQALTMLDVDHEGLDYVDQKILRTMIEMYGGGPVGLGTLSVNIAEERETVEDMYEPYLIQKGFIMRTRTGRVATAKAYEHMGYDYTRDN.

Residues 1 to 181 form a large ATPase domain (RuvB-L) region; it reads MARILDNDLL…FGINGHMEYY (181 aa). Residues Leu-20, Arg-21, Gly-62, Lys-65, Thr-66, Thr-67, 128–130, Arg-171, Tyr-181, and Arg-218 each bind ATP; that span reads EDY. Thr-66 lines the Mg(2+) pocket. Residues 130–148 are presensor-1 beta-hairpin; it reads YYIDIMIGAGETSRSVHLD. The tract at residues 182 to 252 is small ATPAse domain (RuvB-S); that stretch reads ELPDLTEIVE…IADQALTMLD (71 aa). Residues 255-333 form a head domain (RuvB-H) region; the sequence is HEGLDYVDQK…HMGYDYTRDN (79 aa). Arg-291, Arg-310, Arg-312, and Arg-315 together coordinate DNA.

It belongs to the RuvB family. In terms of assembly, homohexamer. Forms an RuvA(8)-RuvB(12)-Holliday junction (HJ) complex. HJ DNA is sandwiched between 2 RuvA tetramers; dsDNA enters through RuvA and exits via RuvB. Only 4 subunits contact one DNA strand at any time. Two adjacent subunits are contacted by domain III of RuvA. An RuvB hexamer assembles on each DNA strand where it exits the tetramer. Each RuvB hexamer is contacted by two RuvA subunits (via domain III) on 2 adjacent RuvB subunits; this complex drives branch migration. In the full resolvosome a probable DNA-RuvA(4)-RuvB(12)-RuvC(2) complex forms which resolves the HJ.

The protein localises to the cytoplasm. The catalysed reaction is ATP + H2O = ADP + phosphate + H(+). Its activity is regulated as follows. Binding of domain III of RuvA to a single subunit of the RuvB hexamer activates the ATPase 2 subunits away and nucleotide exchange in the adjacent subunit. In terms of biological role, the RuvA-RuvB-RuvC complex processes Holliday junction (HJ) DNA during genetic recombination and DNA repair, while the RuvA-RuvB complex plays an important role in the rescue of blocked DNA replication forks via replication fork reversal (RFR). Catalyzes branch migration on Holliday junction (HJ) DNA in complex with RuvA from S.typhimurim and ATP. RuvA specifically binds to HJ cruciform DNA, conferring on it an open structure. The RuvB hexamer acts as an ATP-dependent pump, pulling dsDNA into and through the RuvAB complex. Forms 2 homohexamers on either side of HJ DNA bound by 1 or 2 RuvA tetramers; 4 subunits per hexamer contact DNA at a time. Coordinated motions by a converter formed by DNA-disengaged RuvB subunits stimulates ATP hydrolysis and nucleotide exchange. Immobilization of the converter enables RuvB to convert the ATP-contained energy into a lever motion, pulling 2 nucleotides of DNA out of the RuvA tetramer per ATP hydrolyzed, thus driving DNA branch migration. The RuvB motors rotate together with the DNA substrate, which together with the progressing nucleotide cycle forms the mechanistic basis for DNA recombination by continuous branch migration. Branch migration allows RuvC to scan DNA until it finds its consensus sequence, where it cleaves and resolves cruciform DNA. The sequence is that of Holliday junction branch migration complex subunit RuvB from Streptococcus thermophilus (strain ATCC BAA-250 / LMG 18311).